The sequence spans 401 residues: Glutamyl-tRNA reductase (401 aa).

Substrate is bound by residues threonine 45–arginine 48, serine 101, glutamate 106–glutamine 108, and glutamine 112. The active-site Nucleophile is the cysteine 46. Position 177-182 (glycine 177–glycine 182) interacts with NADP(+).

Belongs to the glutamyl-tRNA reductase family. As to quaternary structure, homodimer.

It catalyses the reaction (S)-4-amino-5-oxopentanoate + tRNA(Glu) + NADP(+) = L-glutamyl-tRNA(Glu) + NADPH + H(+). It functions in the pathway porphyrin-containing compound metabolism; protoporphyrin-IX biosynthesis; 5-aminolevulinate from L-glutamyl-tRNA(Glu): step 1/2. Functionally, catalyzes the NADPH-dependent reduction of glutamyl-tRNA(Glu) to glutamate 1-semialdehyde (GSA). This Clostridium beijerinckii (strain ATCC 51743 / NCIMB 8052) (Clostridium acetobutylicum) protein is Glutamyl-tRNA reductase.